We begin with the raw amino-acid sequence, 206 residues long: Small ribosomal subunit protein uS4 (206 aa).

One can recognise an S4 RNA-binding domain in the interval 96-156 (GRLDNVVYRM…EKAKKQSRVK (61 aa)).

This sequence belongs to the universal ribosomal protein uS4 family. In terms of assembly, part of the 30S ribosomal subunit. Contacts protein S5. The interaction surface between S4 and S5 is involved in control of translational fidelity.

One of the primary rRNA binding proteins, it binds directly to 16S rRNA where it nucleates assembly of the body of the 30S subunit. Functionally, with S5 and S12 plays an important role in translational accuracy. The polypeptide is Small ribosomal subunit protein uS4 (Klebsiella pneumoniae (strain 342)).